Consider the following 339-residue polypeptide: Photosystem II assembly lipoprotein Ycf48 (339 aa).

The first 22 residues, 1-22 (MVIVKSWQKIFTLLVVLLLCIG), serve as a signal peptide directing secretion. A lipid anchor (N-palmitoyl cysteine) is attached at Cys23. Residue Cys23 is the site of S-diacylglycerol cysteine attachment.

Belongs to the Ycf48 family. In terms of assembly, part of early PSII assembly complexes which includes D1 (psbA) and PsbI; not found in mature PSII. Binds to the lumenal side of PSII complexes. Interacts with YidC.

It localises to the cellular thylakoid membrane. A factor required for optimal assembly of photosystem II (PSII), acting in the early stages of PSII assembly. Also plays a role in replacement of photodamaged D1 (psbA). Assists YidC in synthesis of chlorophyll-binding proteins. This chain is Photosystem II assembly lipoprotein Ycf48, found in Nostoc sp. (strain PCC 7120 / SAG 25.82 / UTEX 2576).